A 182-amino-acid chain; its full sequence is Envelope glycoprotein L (182 aa).

The first 39 residues, 1–39, serve as a signal peptide directing secretion; that stretch reads MRRSAARGRAVSSTQTAMGAGAAIAVWAAALIALYSSCA. The 131-residue stretch at 52–182 folds into the gL alphaherpesvirus-type domain; that stretch reads ANASDTIGRL…RPEKTAPGGV (131 aa). A disulfide bridge links Cys-73 with Cys-109.

Belongs to the herpesviridae glycoprotein L (gL) family. Alphaherpesvirinae gL subfamily. Interacts with glycoprotein H (gH); this interaction is necessary for the correct processing and cell surface expression of gH. The heterodimer gH/gL seems to interact with gB trimers during fusion. Post-translationally, O-glycosylated, and sialylated.

The protein localises to the virion membrane. It is found in the host cell membrane. Its subcellular location is the host Golgi apparatus. The protein resides in the host trans-Golgi network. Functionally, the heterodimer glycoprotein H-glycoprotein L is required for the fusion of viral and plasma membranes leading to virus entry into the host cell. Acts as a functional inhibitor of gH and maintains gH in an inhibited form. Upon binding to host integrins, gL dissociates from gH leading to activation of the viral fusion glycoproteins gB and gH. The polypeptide is Envelope glycoprotein L (Amazona oratrix (yellow-headed parrot)).